The following is a 61-amino-acid chain: Large ribosomal subunit protein eL37 (61 aa).

Cys19, Cys22, Cys34, and Cys37 together coordinate Zn(2+). The segment at 19–37 (CRRCGRNAYNVSKHYCAAC) adopts a C4-type zinc-finger fold.

It belongs to the eukaryotic ribosomal protein eL37 family. The cofactor is Zn(2+).

Its function is as follows. Binds to the 23S rRNA. The chain is Large ribosomal subunit protein eL37 from Saccharolobus islandicus (strain Y.N.15.51 / Yellowstone #2) (Sulfolobus islandicus).